We begin with the raw amino-acid sequence, 36 residues long: Photosystem II reaction center protein M (36 aa).

Blocked amino end (Met) is present on Met1. The Lumenal segment spans residues 1–11; it reads MEVNQLGFIAT. A helical transmembrane segment spans residues 12–27; the sequence is ALFVLVPSVFLIILYV. Residues 28–36 lie on the Cytoplasmic side of the membrane; the sequence is QTESQQKSS.

The protein belongs to the PsbM family. As to quaternary structure, PSII is composed of 1 copy each of membrane proteins PsbA, PsbB, PsbC, PsbD, PsbE, PsbF, PsbH, PsbI, PsbJ, PsbK, PsbL, PsbM, PsbT, PsbX, PsbY, PsbZ, Psb30/Ycf12, peripheral proteins PsbO, CyanoQ (PsbQ), PsbU, PsbV, PsbU, PsbV and a large number of cofactors. It forms dimeric complexes. The cofactor is PSII binds multiple chlorophylls, carotenoids and specific lipids..

Its subcellular location is the cellular thylakoid membrane. Functionally, one of the components of the core complex of photosystem II (PSII). PSII is a light-driven water:plastoquinone oxidoreductase that uses light energy to abstract electrons from H(2)O, generating O(2) and a proton gradient subsequently used for ATP formation. It consists of a core antenna complex that captures photons, and an electron transfer chain that converts photonic excitation into a charge separation. This subunit is found at the monomer-monomer interface. Probably involved in dimerization of PSII; at the monomer-monomer interface the only protein-protein contacts observed are between the 2 PsbM subunits. Lipids, chlorophylls and carotenoids contribute strongly to PSII dimerization. This Thermostichus vulcanus (Synechococcus vulcanus) protein is Photosystem II reaction center protein M.